The primary structure comprises 218 residues: Large ribosomal subunit protein uL16 (218 aa).

It belongs to the universal ribosomal protein uL16 family. As to quaternary structure, component of the large ribosomal subunit. Mature ribosomes consist of a small (40S) and a large (60S) subunit. The 40S subunit contains about 33 different proteins and 1 molecule of RNA (18S). The 60S subunit contains about 49 different proteins and 3 molecules of RNA (28S, 5.8S and 5S).

The protein is Large ribosomal subunit protein uL16 (RpL10) of Drosophila melanogaster (Fruit fly).